A 321-amino-acid chain; its full sequence is Methionyl-tRNA formyltransferase (321 aa).

111–114 is a (6S)-5,6,7,8-tetrahydrofolate binding site; it reads GLLP.

Belongs to the Fmt family.

The enzyme catalyses L-methionyl-tRNA(fMet) + (6R)-10-formyltetrahydrofolate = N-formyl-L-methionyl-tRNA(fMet) + (6S)-5,6,7,8-tetrahydrofolate + H(+). Functionally, attaches a formyl group to the free amino group of methionyl-tRNA(fMet). The formyl group appears to play a dual role in the initiator identity of N-formylmethionyl-tRNA by promoting its recognition by IF2 and preventing the misappropriation of this tRNA by the elongation apparatus. The polypeptide is Methionyl-tRNA formyltransferase (Chlamydia pneumoniae (Chlamydophila pneumoniae)).